The sequence spans 117 residues: Heat shock 70 kDa protein 1-like (117 aa).

ATP contacts are provided by residues E72–K75 and G84–R87.

This sequence belongs to the heat shock protein 70 family. In terms of assembly, interacts with PRKN. As to expression, detected at higher levels in caput epididymal spermatazoa than in cauda epididymal spermatazoa (at protein level).

Its function is as follows. Molecular chaperone implicated in a wide variety of cellular processes, including protection of the proteome from stress, folding and transport of newly synthesized polypeptides, activation of proteolysis of misfolded proteins and the formation and dissociation of protein complexes. Plays a pivotal role in the protein quality control system, ensuring the correct folding of proteins, the re-folding of misfolded proteins and controlling the targeting of proteins for subsequent degradation. This is achieved through cycles of ATP binding, ATP hydrolysis and ADP release, mediated by co-chaperones. The affinity for polypeptides is regulated by its nucleotide bound state. In the ATP-bound form, it has a low affinity for substrate proteins. However, upon hydrolysis of the ATP to ADP, it undergoes a conformational change that increases its affinity for substrate proteins. It goes through repeated cycles of ATP hydrolysis and nucleotide exchange, which permits cycles of substrate binding and release. Positive regulator of PRKN translocation to damaged mitochondria. The protein is Heat shock 70 kDa protein 1-like of Mesocricetus auratus (Golden hamster).